Here is a 270-residue protein sequence, read N- to C-terminus: Cell division protein DivIB (270 aa).

Topologically, residues 1-38 (MTRRNNPELNDEREPIDKIKASIDLKKKTIRRNKRKRR) are cytoplasmic. The chain crosses the membrane as a helical span at residues 39–59 (LIKMLQFLIVIGVLIGIYYFD). The Extracellular portion of the chain corresponds to 60–270 (KSDASRVHNV…QSAVVKACGS (211 aa)). Residues 64–135 (SRVHNVRVNG…INLNVTEKKA (72 aa)) form the POTRA domain.

Belongs to the FtsQ/DivIB family. DivIB subfamily.

It is found in the cell membrane. Cell division protein that may be involved in stabilizing or promoting the assembly of the division complex. This chain is Cell division protein DivIB, found in Erysipelothrix rhusiopathiae (strain Fujisawa).